A 724-amino-acid chain; its full sequence is MQNNNFNTTEINNMINFPMYNGRLEPSLAPALIAVAPIAKYLATALAKWAVKQGFAKLKSEIFPGNTPATMDKVRIEVQTLLDQRLQDDRVKILEGEYKGIIDVSKVFTDYVNQSKFETGTANRLFFDTSNQLISRLPQFEIAGYEGVSISLFTQMCTFHLGLLKDGILAGSDWGFAPADKDALICQFNRFVNEYNTRLMVLYSKEFGRLLAKNLNEALNFRNMCSLYVFPFSEAWSLLRYEGTKLENTLSLWNFVGESINNISPNDWKGALYKLLMGAPNQRLNNVKFNYSYFSDTQATIHRENIHGVLPTYNGGPTITGWIGNGRFSGLSFPCSNELEITKIKQEITYNDKGGNFNSIVPAATRNEILTATVPTSADPFFKTADINWKYFSPGLYSGWNIKFDDTVTLKSRVPSIIPSNILKYDDYYIRAVSACPKGVSLAYNHDFLTLTYNKLEYDAPTTQNIIVGFSPDNTKSFYRSNSHYLSTTDDAYVIPALQFSTVSDRSFLEDTPDQATDGSIKFTDTVLGNEAKYSIRLNTGFNTATRYRLIIRFKAPARLAAGIRVRSQNSGNNKLLGGIPVEGNSGWIDYITDSFTFDDLGITTSSTNAFFSIDSDGVNASQQWYLSKLILVKESSFTTQIPLKPYVIVRCPDTFFVSNNSSSTYEQGYNNNYNQNSSSMYDQGYNNSYNPNSGCTCNQDYNNSYNQNSGCTCNQGYNNNYPK.

The protein belongs to the delta endotoxin family.

In terms of biological role, promotes colloidosmotic lysis by binding to the midgut epithelial cells of mosquitos. Active on Aedes aegypti, Culex pipiens and Anopheles stephensi larvae. The polypeptide is Pesticidal crystal protein Cry11Ba (cry11Ba) (Bacillus thuringiensis subsp. jegathesan).